The sequence spans 83 residues: uncharacterized protein (83 aa).

The interval 58–83 is disordered; it reads EHGHDDEYDEFSDPNAWVPRRSRDTG.

This is an uncharacterized protein from Mycobacterium tuberculosis (strain CDC 1551 / Oshkosh).